The following is a 192-amino-acid chain: Orotate phosphoribosyltransferase 2 (192 aa).

116-124 (EDIVTTGLS) serves as a coordination point for 5-phospho-alpha-D-ribose 1-diphosphate. Orotate contacts are provided by Thr120 and Arg148.

It belongs to the purine/pyrimidine phosphoribosyltransferase family. PyrE subfamily. As to quaternary structure, homodimer. It depends on Mg(2+) as a cofactor.

It carries out the reaction orotidine 5'-phosphate + diphosphate = orotate + 5-phospho-alpha-D-ribose 1-diphosphate. It participates in pyrimidine metabolism; UMP biosynthesis via de novo pathway; UMP from orotate: step 1/2. Catalyzes the transfer of a ribosyl phosphate group from 5-phosphoribose 1-diphosphate to orotate, leading to the formation of orotidine monophosphate (OMP). The protein is Orotate phosphoribosyltransferase 2 of Mesorhizobium japonicum (strain LMG 29417 / CECT 9101 / MAFF 303099) (Mesorhizobium loti (strain MAFF 303099)).